The chain runs to 186 residues: Large ribosomal subunit protein uL22 (186 aa).

The tract at residues 159–186 (KATDEEPTKKKLSKKKLQRQKEKMMRSE) is disordered. A compositionally biased stretch (basic and acidic residues) spans 177–186 (RQKEKMMRSE).

This sequence belongs to the universal ribosomal protein uL22 family.

This is Large ribosomal subunit protein uL22 (RpL17) from Phlebotomus papatasi (Sandfly).